Here is a 231-residue protein sequence, read N- to C-terminus: Chromosome partition protein MukE (231 aa).

The disordered stretch occupies residues 195–231; the sequence is MIRDGEAMPVEGSLSLKDDSDDNDRTDDTAPETGEDE. A compositionally biased stretch (acidic residues) spans 213-231; the sequence is DSDDNDRTDDTAPETGEDE.

Belongs to the MukE family. Interacts, and probably forms a ternary complex, with MukF and MukB. The complex formation is stimulated by calcium or magnesium.

The protein localises to the cytoplasm. It is found in the nucleoid. Involved in chromosome condensation, segregation and cell cycle progression. May participate in facilitating chromosome segregation by condensation DNA from both sides of a centrally located replisome during cell division. Probably acts via its interaction with MukB and MukF. This is Chromosome partition protein MukE from Pectobacterium atrosepticum (strain SCRI 1043 / ATCC BAA-672) (Erwinia carotovora subsp. atroseptica).